We begin with the raw amino-acid sequence, 256 residues long: Pimeloyl-[acyl-carrier protein] methyl ester esterase (256 aa).

Residues H15–P242 form the AB hydrolase-1 domain. Substrate is bound by residues W22, S82–L83, and F143–Q147. The active-site Nucleophile is the S82. Catalysis depends on residues D207 and H235. H235 is a substrate binding site.

The protein belongs to the AB hydrolase superfamily. Carboxylesterase BioH family. Monomer.

Its subcellular location is the cytoplasm. It carries out the reaction 6-carboxyhexanoyl-[ACP] methyl ester + H2O = 6-carboxyhexanoyl-[ACP] + methanol + H(+). It functions in the pathway cofactor biosynthesis; biotin biosynthesis. The physiological role of BioH is to remove the methyl group introduced by BioC when the pimeloyl moiety is complete. It allows to synthesize pimeloyl-ACP via the fatty acid synthetic pathway through the hydrolysis of the ester bonds of pimeloyl-ACP esters. In Escherichia coli O6:H1 (strain CFT073 / ATCC 700928 / UPEC), this protein is Pimeloyl-[acyl-carrier protein] methyl ester esterase.